The chain runs to 251 residues: 3-deoxy-manno-octulosonate cytidylyltransferase (251 aa).

Belongs to the KdsB family.

It is found in the cytoplasm. The enzyme catalyses 3-deoxy-alpha-D-manno-oct-2-ulosonate + CTP = CMP-3-deoxy-beta-D-manno-octulosonate + diphosphate. Its pathway is nucleotide-sugar biosynthesis; CMP-3-deoxy-D-manno-octulosonate biosynthesis; CMP-3-deoxy-D-manno-octulosonate from 3-deoxy-D-manno-octulosonate and CTP: step 1/1. The protein operates within bacterial outer membrane biogenesis; lipopolysaccharide biosynthesis. Activates KDO (a required 8-carbon sugar) for incorporation into bacterial lipopolysaccharide in Gram-negative bacteria. This chain is 3-deoxy-manno-octulosonate cytidylyltransferase, found in Rhizobium johnstonii (strain DSM 114642 / LMG 32736 / 3841) (Rhizobium leguminosarum bv. viciae).